The sequence spans 956 residues: MEKMLVGCLLMLGQLFLVLPVDGRERPQARFPSRGRHVRMYPQTALLESSCENKRADLVFIIDSSRSVNTYDYAKVKEFILDILQFLDIGPDVTRVGLLQYGSTVKNEFSLKTFKRKSEVERAVKRMRHLSTGTMTGLAIQYALNIAFSEAEGARPLRENVPRIIMIVTDGRPQDSVAEVAAKARNTGILIFAIGVGQVDLNTLKAIGSEPHKDHVFLVANFSQIESLTSVFQNKLCTVHMCSVLEHNCAHFCLNTPGSYICKCKQGYILSTDQKTCRIQDLCATEDHGCEQLCVNMLGSFVCQCYSGYTLAEDGKRCTAVDYCASENHGCEHECVNAESSYLCRCHEGFALNSDKKTCSKIDYCASSNHGCQHECVNAQTSALCRCLKGFMLNPDRKTCRRINYCALNKPGCEHECVNTEEGHYCRCRQGYNLDPNGKTCSRVDHCAQQDHGCEQLCLNTEESFVCQCSEGFLINDDLKTCSRADYCLLSNHGCEYSCVNTDKSFACQCPEGHVLRSDGKTCAKLDSCALGDHGCEHSCVSSEDSFVCQCFEGYILRDDGKTCRRKDVCQDVNHGCEHLCVNSGESYVCKCLEGFRLAEDGKRCRRKNVCKSTQHGCEHMCVNNGNSYLCRCSEGFVLAEDGKHCKRCTEGPIDLVFVIDGSKSLGEENFETVKHFVTGIIDSLAVSPKAARVGLLQYSTQVRTEFTLRGFSSAKEMKKAVTHMKYMGKGSMTGLALKHMFERSFTQVEGARPPSTQVPRVAIVFTDGRAQDDVSEWASKAKANGITMYAVGVGKAIEEELQEIASEPIDKHLFYAEDFSTMGEISEKLKEGICEALEDSGGRQDSAAWDLPQQAHQPTEPEPVTIKIKDLLSCSNFAVQHRFLFEEDNLSRSTQKLFHSTKSSGNPLEESQDQCKCENLILFQNVANEEVRKLTQRLEEMTQRMEALENRLKYR.

Residues Met1–Gly23 form the signal peptide. Residues Asp57–Phe232 enclose the VWFA 1 domain. Asn221 carries N-linked (GlcNAc...) asparagine glycosylation. 10 EGF-like domains span residues Thr238–Arg278, Ile279–Thr319, Ala320–Ser360, Lys361–Arg401, Arg402–Ser442, Arg443–Ser483, Arg484–Ala524, Lys525–Arg565, Arg566–Arg606, and Arg607–Lys647. Cystine bridges form between Cys242/Cys253, Cys249/Cys262, Cys264/Cys277, Cys283/Cys294, Cys290/Cys303, Cys305/Cys318, Cys324/Cys335, Cys331/Cys344, Cys346/Cys359, Cys365/Cys376, Cys372/Cys385, Cys387/Cys400, Cys406/Cys417, Cys413/Cys426, Cys428/Cys441, Cys447/Cys458, Cys454/Cys467, Cys469/Cys482, Cys488/Cys499, Cys495/Cys508, Cys510/Cys523, Cys529/Cys540, Cys536/Cys549, Cys551/Cys564, Cys570/Cys581, Cys577/Cys590, Cys592/Cys605, Cys611/Cys622, Cys618/Cys631, and Cys633/Cys646. Residues Asp655–Leu830 enclose the VWFA 2 domain. Asn890 is a glycosylation site (N-linked (GlcNAc...) asparagine). Residues Lys917 to Tyr955 are a coiled coil.

Detected in a variety of organs, including calvaria, uterus, heart and brain, as well as fibroblast and osteoblast cell lines.

Its subcellular location is the secreted. Its function is as follows. Involved in matrix assembly. The chain is Matrilin-2 (Matn2) from Mus musculus (Mouse).